The sequence spans 157 residues: Subgroup A Rous sarcoma virus receptor pg950 (157 aa).

The signal sequence occupies residues 1 to 19 (MARLLPALLLLLLPGNVTG). N-linked (GlcNAc...) asparagine glycosylation is found at N20 and N24. Residues 20–102 (NGSGNGSLSR…RALPARNHGR (83 aa)) lie on the Extracellular side of the membrane. Positions 28-71 (SRCPPGQFRCSEPPGAHGECYPQDWLCDGHPDCDDGRDEWGCGT) constitute an LDL-receptor class A domain. 3 disulfides stabilise this stretch: C30–C47, C37–C60, and C54–C69. Residue N81 is glycosylated (N-linked (GlcNAc...) asparagine). A helical membrane pass occupies residues 103–125 (MWMLITAVLLCCLVAVGGIAAWG). Topologically, residues 126 to 157 (KSKAKSRSDIFSLASASKELLVPDKSQADLFS) are cytoplasmic.

(Microbial infection) Interacts with Rous sarcoma virus envelope protein; this interaction allows the viral attachment.

Its subcellular location is the membrane. Responsible for susceptibility to the retrovirus subgroup A Rous sarcoma virus. The chain is Subgroup A Rous sarcoma virus receptor pg950 from Coturnix japonica (Japanese quail).